Consider the following 201-residue polypeptide: Small ribosomal subunit protein uS4 (201 aa).

The 64-residue stretch at 92 to 155 (ARLDNVVFRL…KSLEVIANSL (64 aa)) folds into the S4 RNA-binding domain.

It belongs to the universal ribosomal protein uS4 family. Part of the 30S ribosomal subunit. Contacts protein S5. The interaction surface between S4 and S5 is involved in control of translational fidelity.

One of the primary rRNA binding proteins, it binds directly to 16S rRNA where it nucleates assembly of the body of the 30S subunit. Functionally, with S5 and S12 plays an important role in translational accuracy. In Phocaeicola vulgatus (strain ATCC 8482 / DSM 1447 / JCM 5826 / CCUG 4940 / NBRC 14291 / NCTC 11154) (Bacteroides vulgatus), this protein is Small ribosomal subunit protein uS4.